The sequence spans 177 residues: Large ribosomal subunit protein uL6 (177 aa).

The protein belongs to the universal ribosomal protein uL6 family. As to quaternary structure, part of the 50S ribosomal subunit.

In terms of biological role, this protein binds to the 23S rRNA, and is important in its secondary structure. It is located near the subunit interface in the base of the L7/L12 stalk, and near the tRNA binding site of the peptidyltransferase center. The polypeptide is Large ribosomal subunit protein uL6 (Laribacter hongkongensis (strain HLHK9)).